The sequence spans 283 residues: Protein/nucleic acid deglycase HchA (283 aa).

Zn(2+)-binding residues include histidine 86, glutamate 91, and histidine 123. Cysteine 185 functions as the Nucleophile in the catalytic mechanism.

This sequence belongs to the peptidase C56 family. HchA subfamily. Homodimer.

It localises to the cytoplasm. The catalysed reaction is N(omega)-(1-hydroxy-2-oxopropyl)-L-arginyl-[protein] + H2O = lactate + L-arginyl-[protein] + H(+). It carries out the reaction N(6)-(1-hydroxy-2-oxopropyl)-L-lysyl-[protein] + H2O = lactate + L-lysyl-[protein] + H(+). The enzyme catalyses S-(1-hydroxy-2-oxopropyl)-L-cysteinyl-[protein] + H2O = lactate + L-cysteinyl-[protein] + H(+). It catalyses the reaction N(omega)-(1-hydroxy-2-oxoethyl)-L-arginyl-[protein] + H2O = L-arginyl-[protein] + glycolate + H(+). The catalysed reaction is N(6)-(1-hydroxy-2-oxoethyl)-L-lysyl-[protein] + H2O = glycolate + L-lysyl-[protein] + H(+). It carries out the reaction S-(1-hydroxy-2-oxoethyl)-L-cysteinyl-[protein] + H2O = glycolate + L-cysteinyl-[protein] + H(+). The enzyme catalyses N(2)-(1-hydroxy-2-oxopropyl)-dGTP + H2O = lactate + dGTP + H(+). It catalyses the reaction N(2)-(1-hydroxy-2-oxopropyl)-GTP + H2O = lactate + GTP + H(+). The catalysed reaction is N(2)-(1-hydroxy-2-oxopropyl)-GDP + H2O = lactate + GDP + H(+). It carries out the reaction N(2)-(1-hydroxy-2-oxopropyl)-GMP + H2O = lactate + GMP + H(+). The enzyme catalyses N(2)-(1-hydroxy-2-oxoethyl)-dGTP + H2O = dGTP + glycolate + H(+). It catalyses the reaction N(2)-(1-hydroxy-2-oxoethyl)-GTP + H2O = glycolate + GTP + H(+). The catalysed reaction is N(2)-(1-hydroxy-2-oxoethyl)-GDP + H2O = glycolate + GDP + H(+). It carries out the reaction N(2)-(1-hydroxy-2-oxoethyl)-GMP + H2O = glycolate + GMP + H(+). The enzyme catalyses an N(2)-(1-hydroxy-2-oxopropyl)-guanosine in RNA + H2O = a guanosine in RNA + lactate + H(+). It catalyses the reaction an N(2)-(1-hydroxy-2-oxopropyl)-2'-deoxyguanosine in DNA + H2O = a 2'-deoxyguanosine in DNA + lactate + H(+). The catalysed reaction is an N(2)-(1-hydroxy-2-oxoethyl)-guanosine in RNA + H2O = a guanosine in RNA + glycolate + H(+). It carries out the reaction an N(2)-(1-hydroxy-2-oxoethyl)-2'-deoxyguanosine in DNA + H2O = a 2'-deoxyguanosine in DNA + glycolate + H(+). In terms of biological role, protein and nucleotide deglycase that catalyzes the deglycation of the Maillard adducts formed between amino groups of proteins or nucleotides and reactive carbonyl groups of glyoxals. Thus, functions as a protein deglycase that repairs methylglyoxal- and glyoxal-glycated proteins, and releases repaired proteins and lactate or glycolate, respectively. Deglycates cysteine, arginine and lysine residues in proteins, and thus reactivates these proteins by reversing glycation by glyoxals. Acts on early glycation intermediates (hemithioacetals and aminocarbinols), preventing the formation of Schiff bases and advanced glycation endproducts (AGE). Also functions as a nucleotide deglycase able to repair glycated guanine in the free nucleotide pool (GTP, GDP, GMP, dGTP) and in DNA and RNA. Is thus involved in a major nucleotide repair system named guanine glycation repair (GG repair), dedicated to reversing methylglyoxal and glyoxal damage via nucleotide sanitization and direct nucleic acid repair. Plays an important role in protecting cells from carbonyl stress. The chain is Protein/nucleic acid deglycase HchA from Escherichia coli O45:K1 (strain S88 / ExPEC).